The chain runs to 322 residues: MFEIHPVKKVSVVIPVYNEQESLPELIRRTTTACESLGKEYEILLIDDGSSDNSAHMLVEASQAENSHIVSILLNRNYGQHSAIMAGFSHVTGDLIITLDADLQNPPEEIPRLVAKADEGYDVVGTVRQNRQDSWFRKTASKMINRLIQRTTGKAMGDYGCMLRAYRRHIVDAMLHCHERSTFIPILANIFARRAIEIPVHHSEREFGESKYSFMRLINLMYDLVTCLTTTPLRMLSLLGSIIAIGGFSIAVLLVILRLTFGPQWAAEGVFMLFAVLFTFIGAQFIGMGLLGEYIGRIYTDVRARPRYFVQQVIRPSSKENE.

The Cytoplasmic portion of the chain corresponds to 1 to 235 (MFEIHPVKKV…TCLTTTPLRM (235 aa)). A helical transmembrane segment spans residues 236–256 (LSLLGSIIAIGGFSIAVLLVI). The Periplasmic segment spans residues 257-269 (LRLTFGPQWAAEG). A helical membrane pass occupies residues 270-290 (VFMLFAVLFTFIGAQFIGMGL). Residues 291–322 (LGEYIGRIYTDVRARPRYFVQQVIRPSSKENE) lie on the Cytoplasmic side of the membrane.

The protein belongs to the glycosyltransferase 2 family.

It localises to the cell inner membrane. The enzyme catalyses UDP-4-deoxy-4-formamido-beta-L-arabinose + di-trans,octa-cis-undecaprenyl phosphate = 4-deoxy-4-formamido-alpha-L-arabinopyranosyl di-trans,octa-cis-undecaprenyl phosphate + UDP. Its pathway is glycolipid biosynthesis; 4-amino-4-deoxy-alpha-L-arabinose undecaprenyl phosphate biosynthesis; 4-amino-4-deoxy-alpha-L-arabinose undecaprenyl phosphate from UDP-4-deoxy-4-formamido-beta-L-arabinose and undecaprenyl phosphate: step 1/2. It functions in the pathway bacterial outer membrane biogenesis; lipopolysaccharide biosynthesis. Catalyzes the transfer of 4-deoxy-4-formamido-L-arabinose from UDP to undecaprenyl phosphate. The modified arabinose is attached to lipid A and is required for resistance to polymyxin and cationic antimicrobial peptides. The polypeptide is Undecaprenyl-phosphate 4-deoxy-4-formamido-L-arabinose transferase (Escherichia coli O139:H28 (strain E24377A / ETEC)).